Reading from the N-terminus, the 173-residue chain is MENHVSLKVVSPALYYAIQDLRAHTNNFLKNQKMKPLSPGHYIIQPSANSKVRSLITKQQHPRKVTLPCNCHFTIHHECNRGFSHRGTYYSPSGNKFRGIRECTESTVYETPMVREIRANLSTEDTNPIQLQPPESVESSQVLDRANDNRIEQDIDWTPFLEGLEKETRDILG.

The segment at 69–85 (CNCHFTIHHECNRGFSH) is a zinc-finger region.

The protein belongs to the geminiviridae transcriptional activator protein family. In terms of assembly, monomer. Interacting with and inactivating host adenosine kinase 2 (ADK2) in the cytoplasm. Interacts with and inhibits host SNF1 kinase.

The protein resides in the host cytoplasm. Its function is as follows. Acts as a suppressor of RNA-mediated gene silencing, also known as post-transcriptional gene silencing (PTGS), a mechanism of plant viral defense that limits the accumulation of viral RNAs. Suppresses the host RNA silencing by inhibiting adenosine kinase 2 (ADK2), a kinase involved in a general methylation pathway. Also suppresses the host basal defense by interacting with and inhibiting SNF1 kinase, a key regulator of cell metabolism implicated in innate antiviral defense. Determines pathogenicity. The polypeptide is Protein C2 (Beet curly top virus (strain California/Logan) (BCTV)).